The chain runs to 89 residues: Large ribosomal subunit protein bL27 (89 aa).

Residues 1–22 (MAHKKAGGSSRNGRDSESKRLG) form a disordered region.

The protein belongs to the bacterial ribosomal protein bL27 family.

This chain is Large ribosomal subunit protein bL27, found in Bartonella tribocorum (strain CIP 105476 / IBS 506).